The primary structure comprises 741 residues: Zinc metalloproteinase nas-30 (741 aa).

2 stretches are compositionally biased toward low complexity: residues Lys-71–Pro-85 and Pro-97–Pro-118. Positions Lys-71–Gln-122 are disordered. Positions Lys-324–Asn-516 constitute a Peptidase M12A domain. 6 cysteine pairs are disulfide-bonded: Cys-364–Cys-515, Cys-385–Cys-404, Cys-519–Cys-539, Cys-541–Cys-550, Cys-562–Cys-583, and Cys-610–Cys-630. Zn(2+) is bound at residue His-412. Glu-413 is a catalytic residue. His-416 and His-422 together coordinate Zn(2+). The 12-residue stretch at Cys-539–Cys-550 folds into the EGF-like domain. The region spanning Cys-550–Leu-648 is the CUB domain. The N-linked (GlcNAc...) asparagine glycan is linked to Asn-633.

Zn(2+) serves as cofactor.

Metalloprotease. In Caenorhabditis elegans, this protein is Zinc metalloproteinase nas-30.